The following is a 419-amino-acid chain: Putative zinc metalloprotease spr0242 (419 aa).

His18 serves as a coordination point for Zn(2+). Glu19 is a catalytic residue. Position 22 (His22) interacts with Zn(2+). Transmembrane regions (helical) follow at residues 169–191 (LITNFAGPMNNFILGVVVFWVLI), 345–367 (ILYFLAMISINIGIFNLIPIPAL), and 388–410 (EIETYVTLAGVVIMVVLMIAVTW).

It belongs to the peptidase M50B family. Zn(2+) serves as cofactor.

It is found in the cell membrane. The polypeptide is Putative zinc metalloprotease spr0242 (Streptococcus pneumoniae (strain ATCC BAA-255 / R6)).